The sequence spans 83 residues: MGYRAKGRRQPKADSVVAPPKRVSIKGLDYKDLASLKRFLSDRGKIRARRVTGASIQQQRQIAKAIKNAREMGVIPFKSGVSR.

This sequence belongs to the bacterial ribosomal protein bS18 family. As to quaternary structure, part of the 30S ribosomal subunit. Forms a tight heterodimer with protein bS6.

In terms of biological role, binds as a heterodimer with protein bS6 to the central domain of the 16S rRNA, where it helps stabilize the platform of the 30S subunit. This chain is Small ribosomal subunit protein bS18, found in Tropheryma whipplei (strain TW08/27) (Whipple's bacillus).